Here is a 491-residue protein sequence, read N- to C-terminus: 4,4'-diapolycopen-4-al dehydrogenase (491 aa).

Residue E208 is part of the active site.

It belongs to the carotenoid/retinoid oxidoreductase family. CrtN subfamily.

It carries out the reaction all-trans-4,4'-diapolycopen-4-al + A + H2O = all-trans-4,4'-diapolycopen-4-oate + AH2 + H(+). Its pathway is carotenoid biosynthesis. Involved in the biosynthesis of the major C30 carotenoid methyl 4'-[6-O-(acylglycosyl)oxy]-4,4'-diapolycopen-4-oic acid via 4,4'-diapolycopen-4-oic acid intermediate. Catalyzes the oxidation of 4,4'-diapolycopen-4-al to yield 4,4'-diapolycopen-4-oic acid. The polypeptide is 4,4'-diapolycopen-4-al dehydrogenase (Metabacillus indicus (Bacillus indicus)).